The following is a 242-amino-acid chain: MRPEIVLFGDSITAQSFRSGGWGSALADAYSRKADVVVRGYGGYNTRWALFLLHHIFPLGSSSPPVATTIFFGANDAALKGRTSDRQHVPVEEYTDNVRKIVQHLKKCSPTMLIVLITPPPIDEAGRQSYAESIYGEKAMKEPERTNETTGVYAQHCVALAEELGLRCVNLWSKMQETNDWQKKYLSDGLHLTPEGNGVVFDEVSRVFREAWLSPEEMPFDFPHHSHIDGKNPSKAFEERCL.

The active-site Nucleophile is serine 11. Residues 223-242 (PHHSHIDGKNPSKAFEERCL) form a disordered region.

The protein belongs to the 'GDSL' lipolytic enzyme family.

The chain is GDSL esterase/lipase At5g62930 from Arabidopsis thaliana (Mouse-ear cress).